Reading from the N-terminus, the 291-residue chain is GCN5-related N-acetyltransferase 4, chloroplastic (291 aa).

The transit peptide at 1–61 (MRSTPLGTTA…PSQINSGACN (61 aa)) directs the protein to the chloroplast. In terms of domain architecture, N-acetyltransferase spans 76 to 280 (IVVREARLED…RFTFMMKLVN (205 aa)). Acetyl-CoA-binding positions include 199–201 (VAV) and 207–212 (RKGIAK). Position 217 is an N6-acetyllysine (K217). Residues 238–240 (NLG) and Y245 contribute to the acetyl-CoA site. Y245 serves as the catalytic Proton donor. An N6-acetyllysine mark is found at K254 and K265.

This sequence belongs to the acetyltransferase family. GNAT subfamily. As to quaternary structure, oligomer. Autoacetylated at K-217, K-254 and K-265. Expressed in green tissues.

It is found in the plastid. The protein localises to the chloroplast. The catalysed reaction is an N-terminal L-alpha-aminoacyl-[protein] + acetyl-CoA = N-terminal N(alpha)-acetyl-L-alpha-aminoacyl-[protein] + CoA + H(+). The enzyme catalyses L-lysyl-[protein] + acetyl-CoA = N(6)-acetyl-L-lysyl-[protein] + CoA + H(+). It carries out the reaction N-terminal L-alanyl-[protein] + acetyl-CoA = N-terminal N(alpha)-acetyl-L-alanyl-[protein] + CoA + H(+). It catalyses the reaction N-terminal L-seryl-[protein] + acetyl-CoA = N-terminal N(alpha)-acetyl-L-seryl-[protein] + CoA + H(+). The catalysed reaction is N-terminal L-threonyl-[protein] + acetyl-CoA = N-terminal N(alpha)-acetyl-L-threonyl-[protein] + CoA + H(+). The enzyme catalyses N-terminal L-methionyl-[protein] + acetyl-CoA = N-terminal N(alpha)-acetyl-L-methionyl-[protein] + CoA + H(+). It carries out the reaction N-terminal L-valyl-[protein] + acetyl-CoA = N-terminal N(alpha)-acetyl-L-valyl-[protein] + CoA + H(+). It catalyses the reaction N-terminal glycyl-[protein] + acetyl-CoA = N-terminal N(alpha)-acetylglycyl-[protein] + CoA + H(+). Protein acetyltransferase with dual specificity triggering both N-alpha-acetylation (NTA), with a large spectrum of modified N-termini, including methionine, alanine, serine, threonine and to a lower extent glycine and valine as substrates, and epsilon-lysine acetylation (KA) of several plastid proteins. The polypeptide is GCN5-related N-acetyltransferase 4, chloroplastic (Arabidopsis thaliana (Mouse-ear cress)).